Here is a 930-residue protein sequence, read N- to C-terminus: MATNFLTQIFGSRNDRLLKQYRKTVERINALEPEFEKLSDDGLRAKTQEFKDRIAKGETLDDLLPEAFATVREGSKRVMKMRHFDVQLLGGMALHNGKIAEMRTGEGKTLTATLPVYLNALSGKGVHVVTVNDYLANRDAQWMGRLYNFLGLTVGINLPQMPREEKQQAYGSDITYGTNNEYGFDYLRDNMVYEPGDRVQRMLNYAIVDEVDSILIDEARTPLIISGQAEDHTDLYLAINKVVPLLTKQEGEADPRTGEGVTVPGDFTVDEKTHQVFLTEDGHEKAEQLLGEFKLLPEGASLYDPANITLMHHLNAALRARHLYHRDQHYVVQQGEVVIVDEFTGRLMTGRRWSDGLHQAVEAKEGVQIQAENQTLASITFQNYFRLYGKLAGMTGTADTEAYEFQEIYGLETVIIPPNRLSKRDDQLDRVYKTTREKYEAAIQDIRECYERGQPVLVGTSSIENSEIIDGLLTQAGLPHQVLNAKQHAREADIVAQAGRTKMITIATNMAGRGTDIVLGGNIEKMIEAIENDEGRDEATKAADIAHVRDEWTRDHEFVKSLGGLRIIATERHESRRIDNQLRGRSGRQGDPGSSRFYLSLDDPLMRIFAGDRVKAIMDRLKMPDGEAIEAGIVTRSIESAQRKVEARNFDIRKQLLEYDDVSNDQRKVIYQQRNDILDAADLSAQIAALREGCFTDLVRQYVPAESVEEQWDLQGLEKTLSNEWGIDMPLKQQVEAAEAVSDEDIVDMVVKAANDSFDAKVALIGQENFTQFERMVLLQSIDTHWREHLASLDYLRQGIHLRGYAQKQPKQEYKREAFELFGQLLDSVKNEVTRQLMTVRVQSGEQLEEAADALESRGENVSNITYSAPTETGEVEVRLDEENQRRIAAAGLGLGTLGAEAAAFARVGRNDPCPCGSGKKYKHCHGKLS.

Residues Q87, 105-109 (GEGKT), and D516 each bind ATP. C914, C916, C925, and H926 together coordinate Zn(2+).

It belongs to the SecA family. Monomer and homodimer. Part of the essential Sec protein translocation apparatus which comprises SecA, SecYEG and auxiliary proteins SecDF-YajC and YidC. Zn(2+) is required as a cofactor.

It is found in the cell inner membrane. It localises to the cytoplasm. It catalyses the reaction ATP + H2O + cellular proteinSide 1 = ADP + phosphate + cellular proteinSide 2.. In terms of biological role, part of the Sec protein translocase complex. Interacts with the SecYEG preprotein conducting channel. Has a central role in coupling the hydrolysis of ATP to the transfer of proteins into and across the cell membrane, serving both as a receptor for the preprotein-SecB complex and as an ATP-driven molecular motor driving the stepwise translocation of polypeptide chains across the membrane. This chain is Protein translocase subunit SecA, found in Variovorax paradoxus (strain S110).